The following is a 156-amino-acid chain: Small ribosomal subunit protein uS7 (156 aa).

It belongs to the universal ribosomal protein uS7 family. As to quaternary structure, part of the 30S ribosomal subunit. Contacts proteins S9 and S11.

One of the primary rRNA binding proteins, it binds directly to 16S rRNA where it nucleates assembly of the head domain of the 30S subunit. Is located at the subunit interface close to the decoding center, probably blocks exit of the E-site tRNA. The sequence is that of Small ribosomal subunit protein uS7 from Acidithiobacillus ferrooxidans (strain ATCC 53993 / BNL-5-31) (Leptospirillum ferrooxidans (ATCC 53993)).